We begin with the raw amino-acid sequence, 322 residues long: MADEVKLSKLIKDNKSILEVYQGQEYVNAKKIYVSDIYRPGLELTGYFDFYPAQRIQLLGRTEISYAARLDHEIRTHVFTKMATKATPCFLISRSLPVPEELSEAAEKANIPILRTSESTTYISSILTEYLRARLAKRNSIHGVLVEIKGMGVLLTGASGVGKSETALGLVQRGHRLIADDRVDVFQKDHNTVVGEAPKILRHLMEIRGIGIIDVMNLFGAGAVKSRTEIQLVINLVNWDPKANYDRLGFQENTREICNVEIPQVNIPVKVGRNIEIIIEVAAMNFRAKKMGYDATQMFDNNLTNLISEHSKEDTDKVQHDD.

Residues histidine 142 and lysine 163 contribute to the active site. An ATP-binding site is contributed by 157 to 164; the sequence is GASGVGKS. Serine 164 lines the Mg(2+) pocket. The Proton acceptor; for phosphorylation activity. Proton donor; for dephosphorylation activity role is filled by aspartate 181. An important for the catalytic mechanism of both phosphorylation and dephosphorylation region spans residues 205–214; sequence MEIRGIGIID. Residue glutamate 206 participates in Mg(2+) binding. The active site involves arginine 247. Positions 268 to 273 are important for the catalytic mechanism of dephosphorylation; that stretch reads PVKVGR.

Belongs to the HPrK/P family. In terms of assembly, homohexamer. The cofactor is Mg(2+).

It carries out the reaction [HPr protein]-L-serine + ATP = [HPr protein]-O-phospho-L-serine + ADP + H(+). The catalysed reaction is [HPr protein]-O-phospho-L-serine + phosphate + H(+) = [HPr protein]-L-serine + diphosphate. Functionally, catalyzes the ATP- as well as the pyrophosphate-dependent phosphorylation of a specific serine residue in HPr, a phosphocarrier protein of the phosphoenolpyruvate-dependent sugar phosphotransferase system (PTS). HprK/P also catalyzes the pyrophosphate-producing, inorganic phosphate-dependent dephosphorylation (phosphorolysis) of seryl-phosphorylated HPr (P-Ser-HPr). The two antagonistic activities of HprK/P are regulated by several intracellular metabolites, which change their concentration in response to the absence or presence of rapidly metabolisable carbon sources (glucose, fructose, etc.) in the growth medium. Therefore, by controlling the phosphorylation state of HPr, HPrK/P is a sensor enzyme that plays a major role in the regulation of carbon metabolism and sugar transport: it mediates carbon catabolite repression (CCR), and regulates PTS-catalyzed carbohydrate uptake and inducer exclusion. The sequence is that of HPr kinase/phosphorylase from Lactobacillus acidophilus (strain ATCC 700396 / NCK56 / N2 / NCFM).